We begin with the raw amino-acid sequence, 562 residues long: Putative transport protein YPA_0617 (562 aa).

Transmembrane regions (helical) follow at residues 8 to 28 (LLNGNYILLLFVVLALGLCLG), 37 to 57 (LGNAIGVLVVSLLLGQQHFAI), 66 to 86 (FMLFIFCVGVEAGPNFFSIFF), 94 to 114 (MLALVMVGSAMILALGLGKLF), 118 to 138 (IGLTAGMLAGSMTSTPVLVGA), and 158 to 178 (NLSLGYALTYLIGLVSLILGA). 2 consecutive RCK C-terminal domains span residues 202–288 (LDTD…SFRN) and 290–373 (KEVF…KIGF). 5 consecutive transmembrane segments (helical) span residues 383 to 403 (LLAFCSFFILGLMIGLITFQF), 406 to 426 (FSFGIGNAAGLLLAGIMLGFL), 447 to 467 (FGLMVFMAGVGLSAGGGINSS), 475 to 495 (MLISGLIVSLVPVVICFVFGA), and 541 to 561 (IANVLLTLAGSLIVILWPGIL).

Belongs to the AAE transporter (TC 2.A.81) family. YbjL subfamily.

Its subcellular location is the cell membrane. The protein is Putative transport protein YPA_0617 of Yersinia pestis bv. Antiqua (strain Antiqua).